Consider the following 498-residue polypeptide: Hexokinase-1 (498 aa).

Residues 4–24 (VTVGAAVVGAAAVCAVAALIV) traverse the membrane as a helical segment. Residues 35-488 (GRAMAILREF…SGIGAALLRA (454 aa)) enclose the Hexokinase domain. Residues 89–228 (QLVMKLGVFY…VLDMRVSALV (140 aa)) form a hexokinase small subdomain region. Residues glycine 104, threonine 105, and asparagine 106 each coordinate ADP. Residues threonine 194, lysine 195, asparagine 229, and aspartate 230 each contribute to the D-glucose site. A hexokinase large subdomain region spans residues 229–477 (NDTVGTLAGG…TSIVFVHSND (249 aa)). Threonine 253 provides a ligand contact to ADP. D-glucose-binding residues include asparagine 256, glutamate 284, and glutamate 315. Glycine 442 is an ADP binding site.

This sequence belongs to the hexokinase family. In terms of tissue distribution, expressed in young and mature leaves, stems, roots, stolons, and developing and mature tubers.

The protein resides in the plastid. It localises to the chloroplast outer membrane. The enzyme catalyses a D-hexose + ATP = a D-hexose 6-phosphate + ADP + H(+). The catalysed reaction is D-fructose + ATP = D-fructose 6-phosphate + ADP + H(+). It catalyses the reaction D-glucose + ATP = D-glucose 6-phosphate + ADP + H(+). It functions in the pathway carbohydrate metabolism; hexose metabolism. It participates in carbohydrate degradation; glycolysis; D-glyceraldehyde 3-phosphate and glycerone phosphate from D-glucose: step 1/4. Functionally, fructose and glucose phosphorylating enzyme. May be involved in the phosphorylation of glucose during the export from plastids to cytosol. Seems neither to be involved in cell sugar sensing nor in carbohydrate metabolism in tuber. This is Hexokinase-1 (HXK1) from Solanum tuberosum (Potato).